A 571-amino-acid polypeptide reads, in one-letter code: Urease subunit alpha (571 aa).

The 439-residue stretch at 133-571 (GGVDSHIHFI…LPLAQRYFLF (439 aa)) folds into the Urease domain. Ni(2+)-binding residues include H138, H140, and K221. Position 221 is an N6-carboxylysine (K221). H223 contacts substrate. Positions 250 and 276 each coordinate Ni(2+). The active-site Proton donor is the H324. Position 364 (D364) interacts with Ni(2+).

The protein belongs to the metallo-dependent hydrolases superfamily. Urease alpha subunit family. Heterotrimer of UreA (gamma), UreB (beta) and UreC (alpha) subunits. Three heterotrimers associate to form the active enzyme. It depends on Ni cation as a cofactor. In terms of processing, carboxylation allows a single lysine to coordinate two nickel ions.

The protein localises to the cytoplasm. The catalysed reaction is urea + 2 H2O + H(+) = hydrogencarbonate + 2 NH4(+). The protein operates within nitrogen metabolism; urea degradation; CO(2) and NH(3) from urea (urease route): step 1/1. This chain is Urease subunit alpha, found in Anaeromyxobacter sp. (strain Fw109-5).